The sequence spans 148 residues: Glutamyl-tRNA(Gln) amidotransferase subunit C, mitochondrial (148 aa).

A mitochondrion-targeting transit peptide spans 1-10 (MLRLLNKRFY).

Belongs to the GatC family. Subunit of the heterotrimeric GatCAB amidotransferase (AdT) complex, composed of A, B and C subunits.

The protein localises to the mitochondrion. It catalyses the reaction L-glutamyl-tRNA(Gln) + L-glutamine + ATP + H2O = L-glutaminyl-tRNA(Gln) + L-glutamate + ADP + phosphate + H(+). Functionally, allows the formation of correctly charged Gln-tRNA(Gln) through the transamidation of misacylated Glu-tRNA(Gln) in the mitochondria. The reaction takes place in the presence of glutamine and ATP through an activated gamma-phospho-Glu-tRNA(Gln). This Drosophila ananassae (Fruit fly) protein is Glutamyl-tRNA(Gln) amidotransferase subunit C, mitochondrial.